The primary structure comprises 243 residues: Sugar fermentation stimulation protein homolog (243 aa).

This sequence belongs to the SfsA family.

This Acaryochloris marina (strain MBIC 11017) protein is Sugar fermentation stimulation protein homolog.